The primary structure comprises 308 residues: UPF0282 protein M164_2122 (308 aa).

It belongs to the UPF0282 family.

This is UPF0282 protein M164_2122 from Saccharolobus islandicus (strain M.16.4 / Kamchatka #3) (Sulfolobus islandicus).